Reading from the N-terminus, the 216-residue chain is Large ribosomal subunit protein uL3 (216 aa).

The segment at 137-157 (GASHGAHKNHRKPGSIGGAST) is disordered.

The protein belongs to the universal ribosomal protein uL3 family. In terms of assembly, part of the 50S ribosomal subunit. Forms a cluster with proteins L14 and L19.

Functionally, one of the primary rRNA binding proteins, it binds directly near the 3'-end of the 23S rRNA, where it nucleates assembly of the 50S subunit. The protein is Large ribosomal subunit protein uL3 of Paenarthrobacter aurescens (strain TC1).